Reading from the N-terminus, the 150-residue chain is MADMGRHGMAMAMAPAAAGGAGRRKRYMHMTFYWGKNSEILFTGWPGASGGMYALALAAVFALAVLLEFLGSPRVQESSSLGSRRRRATAAAVHAVRVGLAYLLMLALMSFNVGVLLAAVAGHAAGFLAFRAGLCGGGYKKGELAPAACC.

The next 2 helical transmembrane spans lie at 50–70 (GGMYALALAAVFALAVLLEFL) and 100–120 (LAYLLMLALMSFNVGVLLAAV).

Belongs to the copper transporter (Ctr) (TC 1.A.56) family. SLC31A subfamily.

It localises to the membrane. In terms of biological role, involved in the transport of copper. This chain is Copper transporter 3 (COPT3), found in Oryza sativa subsp. japonica (Rice).